A 745-amino-acid polypeptide reads, in one-letter code: Cytoskeleton-associated protein 2-like (745 aa).

The tract at residues 25–141 is disordered; it reads AKGKLKSQNT…GELSRKPVGS (117 aa). A compositionally biased stretch (polar residues) spans 30-61; the sequence is KSQNTKPYLKSKNNCQNQPPSKSTIRPKNDVT. Low complexity predominate over residues 109 to 120; that stretch reads SSNPYSKPSSKS. Residues 121–133 show a composition bias toward polar residues; it reads FQQCEAGSSTTGE. A KEN box motif is present at residues 185–187; that stretch reads KEN. The segment covering 192 to 203 has biased composition (basic and acidic residues); sequence LTEPERKPDPKL. Disordered regions lie at residues 192–217, 256–276, and 385–411; these read LTEP…YNQT, VKSQ…KPSR, and RFNS…NNGF. Lys198 is covalently cross-linked (Glycyl lysine isopeptide (Lys-Gly) (interchain with G-Cter in SUMO1); alternate). Lys198 is covalently cross-linked (Glycyl lysine isopeptide (Lys-Gly) (interchain with G-Cter in SUMO2); alternate). Residue Tyr204 is modified to Phosphotyrosine. Polar residues predominate over residues 389–411; the sequence is AIPSTPSIRPNGTSGNKHNNNGF. A Phosphothreonine modification is found at Thr742. Ser745 bears the Phosphoserine mark.

The protein belongs to the CKAP2 family. In terms of processing, ubiquitinated by the anaphase promoting complex/cyclosome (APC/C).

The protein localises to the cytoplasm. The protein resides in the cytoskeleton. Its subcellular location is the spindle pole. Functionally, microtubule-associated protein required for mitotic spindle formation and cell-cycle progression in neural progenitor cells. This chain is Cytoskeleton-associated protein 2-like (CKAP2L), found in Homo sapiens (Human).